A 227-amino-acid chain; its full sequence is E3 ubiquitin-protein ligase ZNRF1 (227 aa).

The disordered stretch occupies residues 1–42; sequence MGGKQSTAARSRGPFPGVSTDDSAVPPPGGAPHFGHYRTGGG. G2 carries the N-myristoyl glycine lipid modification. Positions 2 to 10 are required for endosomal and lysosomal localization and myristoylation; it reads GGKQSTAAR. A phosphoserine mark is found at S50, S52, and S53. Positions 65–105 are disordered; the sequence is GGVPFSLYTPASRGTGDSERAPGGGGSTSDSTYAHGNGYQE. Y103 is subject to Phosphotyrosine. S123 carries the phosphoserine modification. The RING-type; atypical zinc finger occupies 184–225; it reads CVICLEELLQGDTIARLPCLCIYHKSCIDSWFEVNRSCPEHP.

As to quaternary structure, interacts with AKT1, GLUL and TUBB2A. Interacts with ZNRF2. Interacts (via its RING domain) with UBE2N. Interacts (when phosphorylated) with YWHAE. In terms of processing, N-myristoylation targets ZNRF1 to intracellular membranes. Post-translationally, phosphorylated by SRC at Tyr-103; leading to 'Lys-63'-linked ubiquitination of TLR3, lysosomal trafficking and degradation.

It localises to the endosome. The protein resides in the lysosome. Its subcellular location is the membrane. The protein localises to the cytoplasmic vesicle. It is found in the secretory vesicle. It localises to the synaptic vesicle membrane. It carries out the reaction S-ubiquitinyl-[E2 ubiquitin-conjugating enzyme]-L-cysteine + [acceptor protein]-L-lysine = [E2 ubiquitin-conjugating enzyme]-L-cysteine + N(6)-ubiquitinyl-[acceptor protein]-L-lysine.. The protein operates within protein modification; protein ubiquitination. E3 ubiquitin-protein ligase that plays a role in different processes including cell differentiation, receptor recycling or regulation of inflammation. Mediates the ubiquitination of AKT1 and GLUL, thereby playing a role in neuron cells differentiation. Plays a role in the establishment and maintenance of neuronal transmission and plasticity. Regulates Schwann cells differentiation by mediating ubiquitination of GLUL. Promotes neurodegeneration by mediating 'Lys-48'-linked polyubiquitination and subsequent degradation of AKT1 in axons: degradation of AKT1 prevents AKT1-mediated phosphorylation of GSK3B, leading to GSK3B activation and phosphorylation of DPYSL2/CRMP2 followed by destabilization of microtubule assembly in axons. Ubiquitinates the Na(+)/K(+) ATPase alpha-1 subunit/ATP1A1 and thereby influences its endocytosis and/or degradation. Controls ligand-induced EGFR signaling via mediating receptor ubiquitination and recruitment of the ESCRT machinery. Acts as a negative feedback mechanism controlling TLR3 trafficking by mediating TLR3 'Lys-63'-linked polyubiquitination to reduce type I IFN production. Modulates inflammation by promoting caveolin-1/CAV1 ubiquitination and degradation to regulate TLR4-activated immune response. The chain is E3 ubiquitin-protein ligase ZNRF1 (Znrf1) from Mus musculus (Mouse).